A 428-amino-acid chain; its full sequence is MSKSETLYNLAQQVIPGGVNSPVRAFNGVGGTPLFIERANGAYIYDADGRAYLDYVGSWGPMVLGHNHPAIRHAVTDAVQKGLSFGAPTAAEVEMANLVTELVPSMDMVRMVNSGTEATMSAIRLARGYTGRDKIIKFEGCYHGHADCLLVKAGSGALTMGQPNSPGVPADFVKHTLTCTYNDLNSVRQAFENYPEEIACIIVEPVAGNMNCVPPKADFLPGLRALCDEFGALLIIDEVMTGFRVALGGAQAYYDVDPDLTCLGKIIGGGMPVGAFGGHKEVMSQLAPIGPVYQAGTLSGNPIAMAAGLACLQEVSQPGVHQTLDELTTMLADGLLEKAQQAGIPMVVNHVGGMFGLFFTDAKEVTCYQDVMNCDVERFKQFFHLMLEKRIYLAPSAFEAGFMSIAHSKEDIQRTIDAAEYAFSKMKA.

Residue K265 is modified to N6-(pyridoxal phosphate)lysine.

This sequence belongs to the class-III pyridoxal-phosphate-dependent aminotransferase family. HemL subfamily. As to quaternary structure, homodimer. Pyridoxal 5'-phosphate is required as a cofactor.

The protein localises to the cytoplasm. It catalyses the reaction (S)-4-amino-5-oxopentanoate = 5-aminolevulinate. Its pathway is porphyrin-containing compound metabolism; protoporphyrin-IX biosynthesis; 5-aminolevulinate from L-glutamyl-tRNA(Glu): step 2/2. The sequence is that of Glutamate-1-semialdehyde 2,1-aminomutase from Proteus mirabilis (strain HI4320).